We begin with the raw amino-acid sequence, 242 residues long: MSSTVISLAHFCDKHGPRIISVTQSAEKGTLGEELLVPDYPTESYCESCLLQFPEESTRSMRCFIEDVPFITTQYSSIRYQLLNSIIKRAFSEETMIYDNMPFIFFDDLRGLNLVIGFKLYDENARGNERRYCFILTVDSRSHDDSMKMLSEHWNFIIGGFDKMIAYIKNIHKSEFLGKNKTVENNLETLNNNAFIGSYLRANKSKFGRNLVSLTDDKFLFVRIHKWNSFLLHTVMNENKLP.

The region spanning 48–212 is the uDENN FLCN/SMCR8-type domain; sequence SCLLQFPEES…NKSKFGRNLV (165 aa).

Its function is as follows. Required for the nitrogen-regulated transport of amino acid permeases GAP1 and PUT4 from the Golgi to the cell surface. In Saccharomyces cerevisiae (strain ATCC 204508 / S288c) (Baker's yeast), this protein is Protein LST7 (LST7).